The chain runs to 207 residues: Vascular endothelial growth factor B (207 aa).

An N-terminal signal peptide occupies residues 1–21 (MSPLLRRLLLAALLQLAPAQA). Intrachain disulfides connect Cys-47/Cys-89, Cys-78/Cys-122, and Cys-82/Cys-124. Residues 122–139 (CECRPKKKDSAVKPDRAA) are compositionally biased toward basic and acidic residues. The segment at 122-207 (CECRPKKKDS…AASSVAKGGA (86 aa)) is disordered. The segment covering 174 to 207 (PSAHAAPSTTSALTPGPAAAAADAAASSVAKGGA) has biased composition (low complexity).

Belongs to the PDGF/VEGF growth factor family. In terms of assembly, homodimer; disulfide-linked. Can also form heterodimer with VEGF. VEGF-B186 is O-glycosylated. In terms of tissue distribution, expressed in all tissues except liver. Highest levels found in heart, skeletal muscle and pancreas.

The protein resides in the secreted. Functionally, growth factor for endothelial cells. VEGF-B167 binds heparin and neuropilin-1 whereas the binding to neuropilin-1 of VEGF-B186 is regulated by proteolysis. The sequence is that of Vascular endothelial growth factor B (VEGFB) from Homo sapiens (Human).